The sequence spans 545 residues: Putative serine/threonine-protein kinase L673 (545 aa).

The Cyclin N-terminal domain maps to 13 to 125 (RLGLVNWMLN…YKVYYLTIWK (113 aa)). The Protein kinase domain maps to 264–543 (IDFQNKLGSG…NCLKKIKESF (280 aa)). Residues 270-278 (LGSGTYGSV) and Lys-291 each bind ATP. The active-site Proton acceptor is the Asp-384.

The protein belongs to the protein kinase superfamily. Ser/Thr protein kinase family.

The enzyme catalyses L-seryl-[protein] + ATP = O-phospho-L-seryl-[protein] + ADP + H(+). It carries out the reaction L-threonyl-[protein] + ATP = O-phospho-L-threonyl-[protein] + ADP + H(+). In Acanthamoeba polyphaga (Amoeba), this protein is Putative serine/threonine-protein kinase L673.